A 241-amino-acid chain; its full sequence is Eukaryotic translation initiation factor 6 (241 aa).

The protein belongs to the eIF-6 family. In terms of assembly, monomer. Associates with the 60S ribosomal subunit.

It is found in the cytoplasm. It localises to the nucleus. The protein resides in the nucleolus. Its function is as follows. Binds to the 60S ribosomal subunit and prevents its association with the 40S ribosomal subunit to form the 80S initiation complex in the cytoplasm. Is also involved in ribosome biogenesis. Associates with pre-60S subunits in the nucleus and is involved in its nuclear export. The polypeptide is Eukaryotic translation initiation factor 6 (Encephalitozoon cuniculi (strain GB-M1) (Microsporidian parasite)).